The sequence spans 196 residues: Phosphoheptose isomerase (196 aa).

Residues 38-196 enclose the SIS domain; the sequence is LIAGYRAGAR…VEHALFAPRQ (159 aa). 53–55 lines the substrate pocket; sequence NGG. Residues His62 and Glu66 each coordinate Zn(2+). Substrate contacts are provided by residues Glu66, 95 to 96, 121 to 123, Ser126, and Gln173; these read ND and STS. Residues Gln173 and His181 each coordinate Zn(2+).

Belongs to the SIS family. GmhA subfamily. The cofactor is Zn(2+).

Its subcellular location is the cytoplasm. It catalyses the reaction 2 D-sedoheptulose 7-phosphate = D-glycero-alpha-D-manno-heptose 7-phosphate + D-glycero-beta-D-manno-heptose 7-phosphate. The protein operates within carbohydrate biosynthesis; D-glycero-D-manno-heptose 7-phosphate biosynthesis; D-glycero-alpha-D-manno-heptose 7-phosphate and D-glycero-beta-D-manno-heptose 7-phosphate from sedoheptulose 7-phosphate: step 1/1. In terms of biological role, catalyzes the isomerization of sedoheptulose 7-phosphate in D-glycero-D-manno-heptose 7-phosphate. The sequence is that of Phosphoheptose isomerase from Mycobacterium bovis (strain ATCC BAA-935 / AF2122/97).